Reading from the N-terminus, the 476-residue chain is Chromosomal replication initiator protein DnaA (476 aa).

A domain I, interacts with DnaA modulators region spans residues 1–75 (MLAPDTFWLA…TQMAENHFAR (75 aa)). Residues 75 to 139 (RPVQLQLELA…AKEKQEKNPT (65 aa)) are domain II. The tract at residues 110 to 141 (FDAPTESAQKAPKDTKDTKDAKEKQEKNPTRL) is disordered. The span at 120 to 138 (APKDTKDTKDAKEKQEKNP) shows a compositional bias: basic and acidic residues. The tract at residues 140 to 356 (RLNPSFTFNT…GALKRVVAYS (217 aa)) is domain III, AAA+ region. Residues G184, G186, K187, and T188 each coordinate ATP. A domain IV, binds dsDNA region spans residues 357-476 (RFTGHALTLD…FNTLLHILRG (120 aa)).

Belongs to the DnaA family. In terms of assembly, oligomerizes as a right-handed, spiral filament on DNA at oriC.

The protein resides in the cytoplasm. Its function is as follows. Plays an essential role in the initiation and regulation of chromosomal replication. ATP-DnaA binds to the origin of replication (oriC) to initiate formation of the DNA replication initiation complex once per cell cycle. Binds the DnaA box (a 9 base pair repeat at the origin) and separates the double-stranded (ds)DNA. Forms a right-handed helical filament on oriC DNA; dsDNA binds to the exterior of the filament while single-stranded (ss)DNA is stabiized in the filament's interior. The ATP-DnaA-oriC complex binds and stabilizes one strand of the AT-rich DNA unwinding element (DUE), permitting loading of DNA polymerase. After initiation quickly degrades to an ADP-DnaA complex that is not apt for DNA replication. Binds acidic phospholipids. This Nitrosospira multiformis (strain ATCC 25196 / NCIMB 11849 / C 71) protein is Chromosomal replication initiator protein DnaA.